Reading from the N-terminus, the 768-residue chain is 5-methyltetrahydropteroyltriglutamate--homocysteine methyltransferase (768 aa).

5-methyltetrahydropteroyltri-L-glutamate contacts are provided by residues Arg-17–Lys-20 and Lys-117. L-homocysteine-binding positions include Ile-442–Ser-444 and Glu-495. L-methionine-binding positions include Ile-442–Ser-444 and Glu-495. Residues Arg-526–Cys-527 and Trp-572 each bind 5-methyltetrahydropteroyltri-L-glutamate. L-homocysteine is bound at residue Asp-610. Asp-610 is a binding site for L-methionine. Glu-616 serves as a coordination point for 5-methyltetrahydropteroyltri-L-glutamate. Zn(2+) contacts are provided by His-653, Cys-655, and Glu-677. Catalysis depends on His-706, which acts as the Proton donor. Cys-738 serves as a coordination point for Zn(2+).

Belongs to the vitamin-B12 independent methionine synthase family. Zn(2+) is required as a cofactor.

It carries out the reaction 5-methyltetrahydropteroyltri-L-glutamate + L-homocysteine = tetrahydropteroyltri-L-glutamate + L-methionine. The protein operates within amino-acid biosynthesis; L-methionine biosynthesis via de novo pathway; L-methionine from L-homocysteine (MetE route): step 1/1. Its function is as follows. Catalyzes the transfer of a methyl group from 5-methyltetrahydrofolate to homocysteine resulting in methionine formation. The sequence is that of 5-methyltetrahydropteroyltriglutamate--homocysteine methyltransferase from Bifidobacterium adolescentis (strain ATCC 15703 / DSM 20083 / NCTC 11814 / E194a).